The primary structure comprises 214 residues: Redox-sensing transcriptional repressor Rex (214 aa).

The segment at residues 17–56 (LYYRIFKRFYADQVEKASSKQIADAMGIDSATVRRDFSYF) is a DNA-binding region (H-T-H motif). 91–96 (GCGNIG) serves as a coordination point for NAD(+).

This sequence belongs to the transcriptional regulatory Rex family. In terms of assembly, homodimer.

The protein resides in the cytoplasm. Functionally, modulates transcription in response to changes in cellular NADH/NAD(+) redox state. This chain is Redox-sensing transcriptional repressor Rex, found in Streptococcus equi subsp. zooepidemicus (strain H70).